A 308-amino-acid polypeptide reads, in one-letter code: Hydroxyacylglutathione hydrolase, mitochondrial (308 aa).

Residues 1-13 constitute a mitochondrion transit peptide; that stretch reads MVLGRGLLGRRSL. 4 residues coordinate Zn(2+): His102, His104, Asp106, and His107. Lys116 is subject to N6-acetyllysine. The Zn(2+) site is built by His158 and Asp182. Residues 191–193 and 221–223 each bind substrate; these read KFY and HEY. His221 provides a ligand contact to Zn(2+). The residue at position 229 (Lys229) is an N6-acetyllysine; alternate. Lys229 is subject to N6-succinyllysine; alternate. Residue 297 to 300 coordinates substrate; the sequence is RKEK.

It belongs to the metallo-beta-lactamase superfamily. Glyoxalase II family. Monomer. Zn(2+) serves as cofactor. Testis.

It is found in the mitochondrion matrix. The protein resides in the cytoplasm. It catalyses the reaction an S-(2-hydroxyacyl)glutathione + H2O = a 2-hydroxy carboxylate + glutathione + H(+). It carries out the reaction (R)-S-lactoylglutathione + H2O = (R)-lactate + glutathione + H(+). Its pathway is secondary metabolite metabolism; methylglyoxal degradation; (R)-lactate from methylglyoxal: step 2/2. Its function is as follows. Thiolesterase that catalyzes the hydrolysis of S-D-lactoyl-glutathione to form glutathione and D-lactic acid. The protein is Hydroxyacylglutathione hydrolase, mitochondrial (HAGH) of Macaca fascicularis (Crab-eating macaque).